The primary structure comprises 379 residues: Cytochrome b (379 aa).

The next 4 membrane-spanning stretches (helical) occupy residues 33-53, 77-98, 113-133, and 178-198; these read FGSLLGACLTIQIITGLFLAM, WTIRYLHANGASVFFLCLFIHV, WNVGIILLFSVMATAFMGYVL, and FFALHFVLPFVILALVMIHLL. The heme b site is built by His83 and His97. Positions 182 and 196 each coordinate heme b. Residue His201 participates in a ubiquinone binding. The next 4 helical transmembrane spans lie at 226-246, 288-308, 320-340, and 347-367; these read TKDFLGLLLLILLLMVLTLFY, LGGVMALILSILILAIIPLLQ, LSQFLFWILVADLLTLTWIGG, and FITIGQVASILYFLLMVLIMP.

Belongs to the cytochrome b family. The cytochrome bc1 complex contains 11 subunits: 3 respiratory subunits (MT-CYB, CYC1 and UQCRFS1), 2 core proteins (UQCRC1 and UQCRC2) and 6 low-molecular weight proteins (UQCRH/QCR6, UQCRB/QCR7, UQCRQ/QCR8, UQCR10/QCR9, UQCR11/QCR10 and a cleavage product of UQCRFS1). This cytochrome bc1 complex then forms a dimer. Heme b is required as a cofactor.

Its subcellular location is the mitochondrion inner membrane. Functionally, component of the ubiquinol-cytochrome c reductase complex (complex III or cytochrome b-c1 complex) that is part of the mitochondrial respiratory chain. The b-c1 complex mediates electron transfer from ubiquinol to cytochrome c. Contributes to the generation of a proton gradient across the mitochondrial membrane that is then used for ATP synthesis. The chain is Cytochrome b (MT-CYB) from Lepilemur edwardsi (Milne-Edwards's sportive lemur).